We begin with the raw amino-acid sequence, 137 residues long: ATP synthase epsilon chain (137 aa).

It belongs to the ATPase epsilon chain family. F-type ATPases have 2 components, CF(1) - the catalytic core - and CF(0) - the membrane proton channel. CF(1) has five subunits: alpha(3), beta(3), gamma(1), delta(1), epsilon(1). CF(0) has three main subunits: a, b and c.

The protein resides in the cell membrane. Functionally, produces ATP from ADP in the presence of a proton gradient across the membrane. This is ATP synthase epsilon chain from Streptococcus agalactiae serotype Ia (strain ATCC 27591 / A909 / CDC SS700).